A 328-amino-acid polypeptide reads, in one-letter code: Mitotic checkpoint protein BUB3 (328 aa).

WD repeat units lie at residues 4 to 44 (SNEF…LYDV), 47 to 84 (NSMR…MHDL), 87 to 125 (DQEN…LWDP), 129 to 164 (CNAG…VWDL), and 170 to 210 (VQQR…YLDP). At Lys-179 the chain carries N6-acetyllysine. Ser-211 bears the Phosphoserine mark. Lys-216 is covalently cross-linked (Glycyl lysine isopeptide (Lys-Gly) (interchain with G-Cter in ubiquitin)). WD repeat units lie at residues 217–263 (KKYA…IWDP) and 267–316 (KRLC…IRQV).

The protein belongs to the WD repeat BUB3 family. As to quaternary structure, interacts with BUB1 and BUBR1. The BUB1/BUB3 complex interacts with MAD1L1. Interacts with ZNF207/BuGZ; leading to promote stability and kinetochore loading of BUB3. In terms of processing, poly-ADP-ribosylated by PARP1. Ubiquitinated by UBR5, promoting disassembly of the mitotic checkpoint complex from the APC/C complex.

The protein resides in the nucleus. Its subcellular location is the chromosome. The protein localises to the centromere. It localises to the kinetochore. Functionally, has a dual function in spindle-assembly checkpoint signaling and in promoting the establishment of correct kinetochore-microtubule (K-MT) attachments. Promotes the formation of stable end-on bipolar attachments. Necessary for kinetochore localization of BUB1. Regulates chromosome segregation during oocyte meiosis. The BUB1/BUB3 complex plays a role in the inhibition of anaphase-promoting complex or cyclosome (APC/C) when spindle-assembly checkpoint is activated and inhibits the ubiquitin ligase activity of APC/C by phosphorylating its activator CDC20. This complex can also phosphorylate MAD1L1. The polypeptide is Mitotic checkpoint protein BUB3 (BUB3) (Homo sapiens (Human)).